Consider the following 161-residue polypeptide: Phosphopantetheine adenylyltransferase (161 aa).

A substrate-binding site is contributed by Ser-10. Residues 10–11 (SF) and His-18 each bind ATP. Substrate is bound by residues Lys-42, Leu-74, and Arg-88. Residues 88–89 (RG), Glu-99, and 124–130 (YSFLSSS) contribute to the ATP site.

Belongs to the bacterial CoaD family. Homohexamer. Mg(2+) is required as a cofactor.

The protein resides in the cytoplasm. The catalysed reaction is (R)-4'-phosphopantetheine + ATP + H(+) = 3'-dephospho-CoA + diphosphate. Its pathway is cofactor biosynthesis; coenzyme A biosynthesis; CoA from (R)-pantothenate: step 4/5. Functionally, reversibly transfers an adenylyl group from ATP to 4'-phosphopantetheine, yielding dephospho-CoA (dPCoA) and pyrophosphate. This chain is Phosphopantetheine adenylyltransferase, found in Bacillus subtilis (strain 168).